A 117-amino-acid chain; its full sequence is Large ribosomal subunit protein bL20 (117 aa).

Belongs to the bacterial ribosomal protein bL20 family.

Its function is as follows. Binds directly to 23S ribosomal RNA and is necessary for the in vitro assembly process of the 50S ribosomal subunit. It is not involved in the protein synthesizing functions of that subunit. In Idiomarina loihiensis (strain ATCC BAA-735 / DSM 15497 / L2-TR), this protein is Large ribosomal subunit protein bL20.